A 476-amino-acid chain; its full sequence is MKFQGPLACLLLALCLGSGEAGPLQSGEESTGTNIGEALGHGLGDALSEGVGKAIGKEAGGAAGSKVSEALGQGTREAVGTGVRQVPGFGVADALGNRVGEAAHALGNTGHEIGRQAEDVIRHGADAVRGSWQGVPGHNGAWETSGGHGIFGSQGGLGGQGQGNPGGLGTPWVHGYPGNSAGSFGMNPQGAPWGQGGNGGPPNFGTNTQGAVAQPGYGSVRASNQNEGCTNPPPSGSGGGSSNSGGGSGSQSGSSGSGSNGDNNNGSSSGGSSSGSSSGGSSGGSSGGSSGNSGGSRGDSGSESSWGSSTGSSSGNHGGSGGGNGHKPGCEKPGNEARGSGESGIQNSETSPGMFNFDTFWKNFKSKLGFINWDAINKNQVPPPSTRALLYFSRLWEDFKQNTPFLNWKAIIEGADASSLQKRAGRDDQNYNYNQHAYPTAYGGKYSVKTPAKGGVSPSSSASRVQPGLLQWVKFW.

Positions 1 to 21 (MKFQGPLACLLLALCLGSGEA) are cleaved as a signal peptide. Gly residues-rich tracts occupy residues 153–169 (SQGGLGGQGQGNPGGLG), 193–202 (WGQGGNGGPP), 236–259 (GSGGGSSNSGGGSGSQSGSSGSGS), and 268–298 (SSGGSSSGSSSGGSSGGSSGGSSGNSGGSRG). Positions 153-351 (SQGGLGGQGQ…ESGIQNSETS (199 aa)) are disordered. A compositionally biased stretch (low complexity) spans 299 to 315 (DSGSESSWGSSTGSSSG). Positions 316–326 (NHGGSGGGNGH) are enriched in gly residues.

This sequence belongs to the dermokine family. Homooligomer. Seems to be able to homodimerize and homotrimerize. O-glycosylated. As to expression, expressed in epidermis; in the spinous and granular layers and in placenta. Also found in the epithelia of the small intestine, macrophages of the lung and endothelial cells of the lung. Isoform 15 is expressed in epidermis and placenta. Isoform 1 is expressed in epidermis.

It localises to the secreted. Functionally, may act as a soluble regulator of keratinocyte differentiation. The polypeptide is Dermokine (DMKN) (Homo sapiens (Human)).